A 255-amino-acid polypeptide reads, in one-letter code: Hydroxyacylglutathione hydrolase (255 aa).

Histidine 56, histidine 58, aspartate 60, histidine 61, histidine 114, aspartate 133, and histidine 171 together coordinate Zn(2+).

This sequence belongs to the metallo-beta-lactamase superfamily. Glyoxalase II family. In terms of assembly, monomer. It depends on Zn(2+) as a cofactor.

The enzyme catalyses an S-(2-hydroxyacyl)glutathione + H2O = a 2-hydroxy carboxylate + glutathione + H(+). It participates in secondary metabolite metabolism; methylglyoxal degradation; (R)-lactate from methylglyoxal: step 2/2. In terms of biological role, thiolesterase that catalyzes the hydrolysis of S-D-lactoyl-glutathione to form glutathione and D-lactic acid. The sequence is that of Hydroxyacylglutathione hydrolase from Bradyrhizobium diazoefficiens (strain JCM 10833 / BCRC 13528 / IAM 13628 / NBRC 14792 / USDA 110).